We begin with the raw amino-acid sequence, 194 residues long: Small ribosomal subunit protein uS4c (194 aa).

The S4 RNA-binding domain occupies 82–143 (MRLDNILFRL…KERSKVLIQN (62 aa)).

Belongs to the universal ribosomal protein uS4 family. In terms of assembly, part of the 30S ribosomal subunit. Contacts protein S5. The interaction surface between S4 and S5 is involved in control of translational fidelity.

Its subcellular location is the plastid. It localises to the chloroplast. In terms of biological role, one of the primary rRNA binding proteins, it binds directly to 16S rRNA where it nucleates assembly of the body of the 30S subunit. Its function is as follows. With S5 and S12 plays an important role in translational accuracy. The chain is Small ribosomal subunit protein uS4c (rps4) from Trimezia steyermarkii (Steyermark's trimezia).